Reading from the N-terminus, the 173-residue chain is MNFKNTFFWFTALLSLLLDHLTKLWVVKNFALTVPPQTIPLWPGVFHLTYVTNTGAAFSLFSQGGEWLRWLSLGVSVGLMALAILGPNFNRWEQAGYGFLLGGAAGNGIDRFVAGRVVDFLDFRLIGFPIFNLADVFINIGIICLLIAAWGPLPSRRRAERRPSSPPPSDKLP.

Helical transmembrane passes span 7–27, 41–61, 70–90, and 95–115; these read FFWF…LWVV, LWPG…FSLF, WLSL…PNFN, and AGYG…FVAG. Residues Asp119 and Asp135 contribute to the active site. The chain crosses the membrane as a helical span at residues 130–150; that stretch reads IFNLADVFINIGIICLLIAAW.

It belongs to the peptidase A8 family.

Its subcellular location is the cell inner membrane. The catalysed reaction is Release of signal peptides from bacterial membrane prolipoproteins. Hydrolyzes -Xaa-Yaa-Zaa-|-(S,diacylglyceryl)Cys-, in which Xaa is hydrophobic (preferably Leu), and Yaa (Ala or Ser) and Zaa (Gly or Ala) have small, neutral side chains.. It functions in the pathway protein modification; lipoprotein biosynthesis (signal peptide cleavage). This protein specifically catalyzes the removal of signal peptides from prolipoproteins. The sequence is that of Lipoprotein signal peptidase from Cyanothece sp. (strain PCC 7425 / ATCC 29141).